We begin with the raw amino-acid sequence, 448 residues long: MSNESFPETLENLLSTLQTKQQNAIQSEVIEWLHNFCETFHLKIHCHKQFIPSGEKKRAKIPAQETQGNTQPSHHVHRIVLSRAQPVKAQESLLTTMCNGLVLDANTWTCLAIPPPAPFQQATRQVQHFYRNNFYEVVPIQDGTLLTIYYWDDPEHGPSWCLASTHGYDVSNYCWIGDKTFAELVYELLQQHSTCDVTLEKNKTRGTRLFFNNLNPDYCYTIGIRHHNLQPLIYDPQNIWAIQSTNLKTLKTVYPEYYGYIGIPGIQSQVPELPQYDLPYLIRSYKTAMNQAKNAIKNGKKDKGYFNYGYLLISRAPAITKSTSNVLLKSPLLVFLQKSVYQKKHNISNSQRLEFIILQNYLMQHFRDHFIALFPQYISYYTKYQNMLNMIINSIATKDKDHPFAGAVVKKVLEDIENAENIIDHTTIQNYVHQSKYAMLYLSIISHF.

The protein belongs to the asfivirus M448R family.

The protein localises to the virion. The sequence is that of Putative RNA-ligase from Ornithodoros (relapsing fever ticks).